A 434-amino-acid polypeptide reads, in one-letter code: Methylenetetrahydrofolate--tRNA-(uracil-5-)-methyltransferase TrmFO (434 aa).

An FAD-binding site is contributed by 9-14 (GAGLAG).

It belongs to the MnmG family. TrmFO subfamily. FAD serves as cofactor.

The protein resides in the cytoplasm. It catalyses the reaction uridine(54) in tRNA + (6R)-5,10-methylene-5,6,7,8-tetrahydrofolate + NADH + H(+) = 5-methyluridine(54) in tRNA + (6S)-5,6,7,8-tetrahydrofolate + NAD(+). It carries out the reaction uridine(54) in tRNA + (6R)-5,10-methylene-5,6,7,8-tetrahydrofolate + NADPH + H(+) = 5-methyluridine(54) in tRNA + (6S)-5,6,7,8-tetrahydrofolate + NADP(+). Functionally, catalyzes the folate-dependent formation of 5-methyl-uridine at position 54 (M-5-U54) in all tRNAs. The polypeptide is Methylenetetrahydrofolate--tRNA-(uracil-5-)-methyltransferase TrmFO (Listeria welshimeri serovar 6b (strain ATCC 35897 / DSM 20650 / CCUG 15529 / CIP 8149 / NCTC 11857 / SLCC 5334 / V8)).